A 274-amino-acid chain; its full sequence is Shikimate dehydrogenase (NADP(+)) (274 aa).

Residues 14–16 (SQS) and Thr61 contribute to the shikimate site. The Proton acceptor role is filled by Lys65. Shikimate contacts are provided by Asn86 and Asp102. NADP(+) is bound by residues 128 to 132 (GAGGA), 151 to 156 (NRTVEK), and Leu215. Residue Tyr217 coordinates shikimate. Gly239 is an NADP(+) binding site.

It belongs to the shikimate dehydrogenase family. In terms of assembly, homodimer.

It carries out the reaction shikimate + NADP(+) = 3-dehydroshikimate + NADPH + H(+). It participates in metabolic intermediate biosynthesis; chorismate biosynthesis; chorismate from D-erythrose 4-phosphate and phosphoenolpyruvate: step 4/7. In terms of biological role, involved in the biosynthesis of the chorismate, which leads to the biosynthesis of aromatic amino acids. Catalyzes the reversible NADPH linked reduction of 3-dehydroshikimate (DHSA) to yield shikimate (SA). This is Shikimate dehydrogenase (NADP(+)) from Proteus mirabilis (strain HI4320).